The sequence spans 268 residues: Undecaprenyl-diphosphatase (268 aa).

7 helical membrane passes run 5–25 (SIISALVLGLIEGLTEFIPVS), 43–63 (GNTFAVLIQLGAILAILLVYF), 84–104 (FSVLLAFLPAALIGAAAHGFI), 107–127 (VLFETPMLICVVLIVGGIILY), 184–204 (AAEFSFFLAMPTMVGAFALDL), 213–233 (FDDVGLIAAGFIAAFIAGIFV), and 248–268 (PFAIWRILVGTAGLVGLWLLG).

It belongs to the UppP family.

The protein resides in the cell inner membrane. The catalysed reaction is di-trans,octa-cis-undecaprenyl diphosphate + H2O = di-trans,octa-cis-undecaprenyl phosphate + phosphate + H(+). In terms of biological role, catalyzes the dephosphorylation of undecaprenyl diphosphate (UPP). Confers resistance to bacitracin. In Rhizobium meliloti (strain 1021) (Ensifer meliloti), this protein is Undecaprenyl-diphosphatase.